Here is a 325-residue protein sequence, read N- to C-terminus: RNA ligase 1 (325 aa).

It depends on Mg(2+) as a cofactor. Requires Mn(2+) as cofactor. In terms of processing, AMPylates itself (auto-AMPylation).

The catalysed reaction is ATP + (ribonucleotide)n-3'-hydroxyl + 5'-phospho-(ribonucleotide)m = (ribonucleotide)n+m + AMP + diphosphate.. Functionally, functions as an RNA ligase, in vitro. The ligation reaction entails three nucleotidyl transfer steps. In the first step, the RNA ligase reacts with ATP in the absence of nucleic acid to form a covalent ligase-AMP intermediate and release pyrophosphate. In step 2, the ligase-AMP binds to the nucleic acid and transfers the adenylate to the 5'-PO4 terminus to form an adenylylated intermediate. In step 3, the RNA ligase directs the attack of the 3'-OH on the 5'-phosphoanhydride linkage, resulting in a repaired 3'-5' phosphodiester and release of AMP. Exhibits selectivity for single-stranded RNA substrates and may not have nick-sealing activity on double-stranded DNA-RNA hybrids. May play a role in maintaining RNA integrity under stress conditions, for example in response to reactive oxygen species (ROS). This is RNA ligase 1 from Danio rerio (Zebrafish).